The primary structure comprises 576 residues: Lysine--tRNA ligase (576 aa).

E413 and E420 together coordinate Mg(2+).

Belongs to the class-II aminoacyl-tRNA synthetase family. As to quaternary structure, homodimer. The cofactor is Mg(2+).

The protein resides in the cytoplasm. It catalyses the reaction tRNA(Lys) + L-lysine + ATP = L-lysyl-tRNA(Lys) + AMP + diphosphate. In Bacteroides thetaiotaomicron (strain ATCC 29148 / DSM 2079 / JCM 5827 / CCUG 10774 / NCTC 10582 / VPI-5482 / E50), this protein is Lysine--tRNA ligase.